The sequence spans 316 residues: Inactive peptidyl-prolyl cis-trans isomerase FKBP6 (316 aa).

Residues 43 to 132 enclose the PPIase FKBP-type domain; the sequence is DASVLVKYSG…LFEIELLDFL (90 aa). TPR repeat units lie at residues 160–193, 208–241, and 242–275; these read AATE…LHRR, LLVL…DQKN, and AKAL…QPFN.

The protein belongs to the FKBP6 family. In terms of assembly, interacts with HSP72/HSPA2 and CLTC. Interacts with GAPDH; leading to inhibit GAPDH catalytic activity. Interacts (via TPR repeats) with HSP90. Specifically expressed in testis and sperm.

The protein resides in the cytoplasm. The protein localises to the cytosol. It localises to the nucleus. In terms of biological role, co-chaperone required during spermatogenesis to repress transposable elements and prevent their mobilization, which is essential for the germline integrity. Acts via the piRNA metabolic process, which mediates the repression of transposable elements during meiosis by forming complexes composed of piRNAs and Piwi proteins and govern the methylation and subsequent repression of transposons. Acts as a co-chaperone via its interaction with HSP90 and is required for the piRNA amplification process, the secondary piRNA biogenesis. May be required together with HSP90 in removal of 16 nucleotide ping-pong by-products from Piwi complexes, possibly facilitating turnover of Piwi complexes. This Equus caballus (Horse) protein is Inactive peptidyl-prolyl cis-trans isomerase FKBP6 (FKBP6).